Here is a 436-residue protein sequence, read N- to C-terminus: Na(+)/H(+) antiporter NhaA (436 aa).

11 helical membrane passes run 14-34 (AGGIVLIAATILTLILSNSTW), 59-79 (LHHWINDGLMAVFFFVVGLEL), 95-115 (ALPVIAALGGMLAPALIYHQF), 125-145 (WGIPMATDIAFAIGILVLLAW), 152-172 (IIFLTALAIADDLGAVLVIAI), 176-196 (PALHIKALMIAALLLLALLLF), 214-234 (FWYFVILSGIHATVAGIFLAF), 300-320 (AIQPWVTFAVLPVFALANAGI), 336-356 (IGTCLGLVLGKFLGIGLSSWL), 374-394 (LLGAAWLGGIGFTMSLFIGQL), and 407-427 (LGILLASLIAASIGLLWLFQV).

It belongs to the NhaA Na(+)/H(+) (TC 2.A.33) antiporter family.

Its subcellular location is the cell inner membrane. It carries out the reaction Na(+)(in) + 2 H(+)(out) = Na(+)(out) + 2 H(+)(in). Functionally, na(+)/H(+) antiporter that extrudes sodium in exchange for external protons. This chain is Na(+)/H(+) antiporter NhaA, found in Acidithiobacillus ferrooxidans (strain ATCC 23270 / DSM 14882 / CIP 104768 / NCIMB 8455) (Ferrobacillus ferrooxidans (strain ATCC 23270)).